A 241-amino-acid chain; its full sequence is Large ribosomal subunit protein uL3 (241 aa).

2 disordered regions span residues 140-162 and 217-241; these read SHRSIGSTGGRQDPGKTFKNKKM and PLPGKFRENGASAPATEAPAAEETA. At Gln-151 the chain carries N5-methylglutamine. Residues 229–241 show a composition bias toward low complexity; the sequence is APATEAPAAEETA.

It belongs to the universal ribosomal protein uL3 family. In terms of assembly, part of the 50S ribosomal subunit. Forms a cluster with proteins L14 and L19. Methylated by PrmB.

Functionally, one of the primary rRNA binding proteins, it binds directly near the 3'-end of the 23S rRNA, where it nucleates assembly of the 50S subunit. In Methylobacterium radiotolerans (strain ATCC 27329 / DSM 1819 / JCM 2831 / NBRC 15690 / NCIMB 10815 / 0-1), this protein is Large ribosomal subunit protein uL3.